A 361-amino-acid polypeptide reads, in one-letter code: Holliday junction branch migration complex subunit RuvB (361 aa).

Residues 1-25 (MSIHTDDFGQGGFAQGGFPPDKAPD) are disordered. The tract at residues 5 to 207 (TDDFGQGGFA…FGIVARLEFY (203 aa)) is large ATPase domain (RuvB-L). Residues Leu46, Arg47, Gly88, Lys91, Thr92, Thr93, 154 to 156 (EDY), Arg197, Tyr207, and Arg244 contribute to the ATP site. Position 92 (Thr92) interacts with Mg(2+). A small ATPAse domain (RuvB-S) region spans residues 208–278 (TAEELARIVR…LADRALAMLD (71 aa)). The head domain (RuvB-H) stretch occupies residues 281 to 361 (PQGFDIMDRK…GLPVPGDDAS (81 aa)). Positions 336 and 341 each coordinate DNA.

The protein belongs to the RuvB family. In terms of assembly, homohexamer. Forms an RuvA(8)-RuvB(12)-Holliday junction (HJ) complex. HJ DNA is sandwiched between 2 RuvA tetramers; dsDNA enters through RuvA and exits via RuvB. An RuvB hexamer assembles on each DNA strand where it exits the tetramer. Each RuvB hexamer is contacted by two RuvA subunits (via domain III) on 2 adjacent RuvB subunits; this complex drives branch migration. In the full resolvosome a probable DNA-RuvA(4)-RuvB(12)-RuvC(2) complex forms which resolves the HJ.

The protein resides in the cytoplasm. It catalyses the reaction ATP + H2O = ADP + phosphate + H(+). Its function is as follows. The RuvA-RuvB-RuvC complex processes Holliday junction (HJ) DNA during genetic recombination and DNA repair, while the RuvA-RuvB complex plays an important role in the rescue of blocked DNA replication forks via replication fork reversal (RFR). RuvA specifically binds to HJ cruciform DNA, conferring on it an open structure. The RuvB hexamer acts as an ATP-dependent pump, pulling dsDNA into and through the RuvAB complex. RuvB forms 2 homohexamers on either side of HJ DNA bound by 1 or 2 RuvA tetramers; 4 subunits per hexamer contact DNA at a time. Coordinated motions by a converter formed by DNA-disengaged RuvB subunits stimulates ATP hydrolysis and nucleotide exchange. Immobilization of the converter enables RuvB to convert the ATP-contained energy into a lever motion, pulling 2 nucleotides of DNA out of the RuvA tetramer per ATP hydrolyzed, thus driving DNA branch migration. The RuvB motors rotate together with the DNA substrate, which together with the progressing nucleotide cycle form the mechanistic basis for DNA recombination by continuous HJ branch migration. Branch migration allows RuvC to scan DNA until it finds its consensus sequence, where it cleaves and resolves cruciform DNA. The chain is Holliday junction branch migration complex subunit RuvB from Delftia acidovorans (strain DSM 14801 / SPH-1).